We begin with the raw amino-acid sequence, 155 residues long: Ribosome maturation factor RimP (155 aa).

This sequence belongs to the RimP family.

It localises to the cytoplasm. In terms of biological role, required for maturation of 30S ribosomal subunits. The sequence is that of Ribosome maturation factor RimP from Deinococcus geothermalis (strain DSM 11300 / CIP 105573 / AG-3a).